The sequence spans 177 residues: Large ribosomal subunit protein uL6 (177 aa).

Belongs to the universal ribosomal protein uL6 family. As to quaternary structure, part of the 50S ribosomal subunit.

Functionally, this protein binds to the 23S rRNA, and is important in its secondary structure. It is located near the subunit interface in the base of the L7/L12 stalk, and near the tRNA binding site of the peptidyltransferase center. The chain is Large ribosomal subunit protein uL6 from Delftia acidovorans (strain DSM 14801 / SPH-1).